The primary structure comprises 638 residues: Fructose-1,6-bisphosphatase class 3 (638 aa).

Belongs to the FBPase class 3 family. Mn(2+) is required as a cofactor.

It carries out the reaction beta-D-fructose 1,6-bisphosphate + H2O = beta-D-fructose 6-phosphate + phosphate. The protein operates within carbohydrate biosynthesis; gluconeogenesis. This is Fructose-1,6-bisphosphatase class 3 from Pediococcus pentosaceus (strain ATCC 25745 / CCUG 21536 / LMG 10740 / 183-1w).